Reading from the N-terminus, the 186-residue chain is Potassium-transporting ATPase KdpC subunit (186 aa).

The chain crosses the membrane as a helical span at residues 10-30 (LTIITMVLCGFLFPLAITLIG).

This sequence belongs to the KdpC family. In terms of assembly, the system is composed of three essential subunits: KdpA, KdpB and KdpC.

It is found in the cell membrane. Part of the high-affinity ATP-driven potassium transport (or Kdp) system, which catalyzes the hydrolysis of ATP coupled with the electrogenic transport of potassium into the cytoplasm. This subunit acts as a catalytic chaperone that increases the ATP-binding affinity of the ATP-hydrolyzing subunit KdpB by the formation of a transient KdpB/KdpC/ATP ternary complex. This is Potassium-transporting ATPase KdpC subunit from Staphylococcus aureus (strain MRSA252).